The primary structure comprises 241 residues: NH(3)-dependent NAD(+) synthetase (241 aa).

27 to 34 (GISGGIDS) is an ATP binding site. A Mg(2+)-binding site is contributed by Asp33. Position 109 (Arg109) interacts with deamido-NAD(+). Thr129 is a binding site for ATP. Glu134 provides a ligand contact to Mg(2+). Residues Lys142 and Asp149 each contribute to the deamido-NAD(+) site. Positions 158 and 180 each coordinate ATP. 231 to 232 (HK) serves as a coordination point for deamido-NAD(+).

Belongs to the NAD synthetase family. In terms of assembly, homodimer.

The enzyme catalyses deamido-NAD(+) + NH4(+) + ATP = AMP + diphosphate + NAD(+) + H(+). It participates in cofactor biosynthesis; NAD(+) biosynthesis; NAD(+) from deamido-NAD(+) (ammonia route): step 1/1. Functionally, catalyzes the ATP-dependent amidation of deamido-NAD to form NAD. Uses ammonia as a nitrogen source. This Thermoplasma acidophilum (strain ATCC 25905 / DSM 1728 / JCM 9062 / NBRC 15155 / AMRC-C165) protein is NH(3)-dependent NAD(+) synthetase.